The sequence spans 169 residues: MMNANRIPIRILGLDPGLRRTGWGVVSVEGSRMSHVAHGVIVPDEKGEFASRLLCLFEGICAVIDAHRPDEAAVEEVFLNTNAQSTLKLGHARAAALIAPARAGLLVAEYSTRLVKKAVVGTGAADKAQIGFMIARLLPTAGKTTADCADALAVAITHANLRIANRRVA.

Active-site residues include aspartate 15, glutamate 75, and aspartate 147. Positions 15, 75, and 147 each coordinate Mg(2+).

The protein belongs to the RuvC family. Homodimer which binds Holliday junction (HJ) DNA. The HJ becomes 2-fold symmetrical on binding to RuvC with unstacked arms; it has a different conformation from HJ DNA in complex with RuvA. In the full resolvosome a probable DNA-RuvA(4)-RuvB(12)-RuvC(2) complex forms which resolves the HJ. Requires Mg(2+) as cofactor.

It is found in the cytoplasm. It catalyses the reaction Endonucleolytic cleavage at a junction such as a reciprocal single-stranded crossover between two homologous DNA duplexes (Holliday junction).. The RuvA-RuvB-RuvC complex processes Holliday junction (HJ) DNA during genetic recombination and DNA repair. Endonuclease that resolves HJ intermediates. Cleaves cruciform DNA by making single-stranded nicks across the HJ at symmetrical positions within the homologous arms, yielding a 5'-phosphate and a 3'-hydroxyl group; requires a central core of homology in the junction. The consensus cleavage sequence is 5'-(A/T)TT(C/G)-3'. Cleavage occurs on the 3'-side of the TT dinucleotide at the point of strand exchange. HJ branch migration catalyzed by RuvA-RuvB allows RuvC to scan DNA until it finds its consensus sequence, where it cleaves and resolves the cruciform DNA. In Caulobacter sp. (strain K31), this protein is Crossover junction endodeoxyribonuclease RuvC.